Here is a 319-residue protein sequence, read N- to C-terminus: Vomeronasal type-1 receptor 51 (319 aa).

The Extracellular portion of the chain corresponds to Met-1–His-31. A helical membrane pass occupies residues Ile-32–Ile-52. Residues Leu-53–Asp-65 are Cytoplasmic-facing. The helical transmembrane segment at Leu-66–Ala-86 threads the bilayer. Residues Thr-87 to Arg-109 lie on the Extracellular side of the membrane. Cysteines 101 and 188 form a disulfide. Residues Val-110–Leu-130 traverse the membrane as a helical segment. The Cytoplasmic segment spans residues Ser-131 to Cys-150. A helical transmembrane segment spans residues Ala-151–Ile-171. Topologically, residues Ala-172 to Thr-203 are extracellular. Asn-175 carries N-linked (GlcNAc...) asparagine glycosylation. A helical membrane pass occupies residues Leu-204–Val-224. The Cytoplasmic portion of the chain corresponds to Ala-225–Gln-254. The chain crosses the membrane as a helical span at residues Thr-255–Cys-275. Residues Ser-276–Thr-285 lie on the Extracellular side of the membrane. Residues Ser-286–Met-306 form a helical membrane-spanning segment. At Ser-307–Val-319 the chain is on the cytoplasmic side.

The protein belongs to the G-protein coupled receptor 1 family. As to expression, expressed in a subset of sensory neurons located in the apical layer of the vomeronasal organ.

The protein localises to the cell membrane. In terms of biological role, putative pheromone receptor implicated in the regulation of social as well as reproductive behavior. The sequence is that of Vomeronasal type-1 receptor 51 (Vmn1r51) from Mus musculus (Mouse).